The primary structure comprises 130 residues: Small ribosomal subunit protein uS8 (130 aa).

Belongs to the universal ribosomal protein uS8 family. As to quaternary structure, part of the 30S ribosomal subunit. Contacts proteins S5 and S12.

In terms of biological role, one of the primary rRNA binding proteins, it binds directly to 16S rRNA central domain where it helps coordinate assembly of the platform of the 30S subunit. The protein is Small ribosomal subunit protein uS8 of Erwinia tasmaniensis (strain DSM 17950 / CFBP 7177 / CIP 109463 / NCPPB 4357 / Et1/99).